A 191-amino-acid chain; its full sequence is Guanylate kinase (191 aa).

Positions 8-188 constitute a Guanylate kinase-like domain; the sequence is GRLVVLAGPS…AVSDIKEILV (181 aa). 15 to 22 serves as a coordination point for ATP; it reads GPSAVGKS.

The protein belongs to the guanylate kinase family.

The protein resides in the cytoplasm. It carries out the reaction GMP + ATP = GDP + ADP. Essential for recycling GMP and indirectly, cGMP. In Corynebacterium diphtheriae (strain ATCC 700971 / NCTC 13129 / Biotype gravis), this protein is Guanylate kinase.